Consider the following 255-residue polypeptide: MNTARLNQGTPLLLNAVSKHYAENIVLNQLDLHIPAGQFVAVVGRSGGGKSTLLRLLAGLETPTAGDVLAGTTPLAEIQDDTRMMFQDARLLPWKSVIDNVGLGLKGQWRDAARQALAAVGLENRAGEWPAALSGGQKQRVALARALIHRPGLLLLDEPLGALDALTRLEMQDLIVSLWQEHGFTVLLVTHDVSEAVAMADRVLLIEEGKIGLDLTVDIPRPRRLGSVRLAELEAEVLQRVMQRGHSEQPIRRHG.

The ABC transporter domain maps to 12–233; the sequence is LLLNAVSKHY…RLGSVRLAEL (222 aa). Position 44-51 (44-51) interacts with ATP; the sequence is GRSGGGKS.

This sequence belongs to the ABC transporter superfamily. Aliphatic sulfonates importer (TC 3.A.1.17.2) family. As to quaternary structure, the complex is composed of two ATP-binding proteins (SsuB), two transmembrane proteins (SsuC) and a solute-binding protein (SsuA).

It localises to the cell inner membrane. It carries out the reaction ATP + H2O + aliphatic sulfonate-[sulfonate-binding protein]Side 1 = ADP + phosphate + aliphatic sulfonateSide 2 + [sulfonate-binding protein]Side 1.. In terms of biological role, part of the ABC transporter complex SsuABC involved in aliphatic sulfonates import. Responsible for energy coupling to the transport system. The chain is Aliphatic sulfonates import ATP-binding protein SsuB from Escherichia coli O1:K1 / APEC.